The sequence spans 940 residues: MEEDAFPKAYDPKGLEEKLYAFWEESTMFTAQAASDKPPYAIIMPPPNVTGILHMGHALVNTLQDVLIRYKRMSGFEVCWVPGTDHAGIATQTVVERHLYSSLGKRRVDFSREEFLEHVWQWKEKSEGVILSQLRQLGCSCDWSRLRFTMEPLANRAVKKAFKILFDKGHIYRGNYLVNWDPVLQTALADDEVEYEEKDGWLYYIRYRVVGSSEHIVVATTRPETLLGDTAIAISPDDERYSHLLGAKVHLPFVDREIPIIADMSVDPLFGTGAVKITPAHDKDDYRTGMHHNLPMINILTPTGEINENGGIFAGLSKEKARESIITALETLGLFVKKEPYKLRVGVSYRSGAVIEPYLSKQWFVSVDSFRDSLREFVASDAIKIFPPEFTKNYLTWVNNLRDWCISRQLWWGHRIPVWYHKSDAHRMLCYDGEGIPEEVAKDPESWEQDPDVLDTWFSSGLWPLTCLGWPDSECGDLEKFYPTAVLVTGHDILFFWVTRMVLLCSAMVGKKPFSDVFLHGLIFGKSYKRYNDLGEWTYITGEEKYAYDMGKALPKGVIAKWEKLSKSKGNVIDPLEMIAKYGADAVRMALCSCANRGEQIDLDYRLFEEYKNFANKIWNGARFIFSHISNLTSQDLARGIDTTLLGLEDYYILDGFNRLLKELHSAYQNYAFDKITTMAYEFFRNNFCSTYIEIIKPTLYGKQRSKEDQLTKQKLLAVLLVNILGVLHPIAPFVTETLFLKLKEVIGEIKEECSDAITAHALAMLRADSYVVAPYPQSIDIVIPEHLHESFALAERLVYTVRNIRGEMQLDSRASLEVFVICPEGVSIETYVPMVCALGGISSIENLTEEPKDRIYSLGVVEGIRLGVFVPVEHIAKEKTRLEKEKTRLENAIESASRLLSSESFRAKANPDLVCAKEEALKNNRIELQSILDKLASFS.

Positions 47-57 match the 'HIGH' region motif; that stretch reads PNVTGILHMGH. Residues 564–568 carry the 'KMSKS' region motif; the sequence is KLSKS. Position 567 (Lys567) interacts with ATP. Residues 873 to 937 adopt a coiled-coil conformation; it reads VEHIAKEKTR…ELQSILDKLA (65 aa).

The protein belongs to the class-I aminoacyl-tRNA synthetase family. ValS type 1 subfamily. As to quaternary structure, monomer.

It is found in the cytoplasm. It carries out the reaction tRNA(Val) + L-valine + ATP = L-valyl-tRNA(Val) + AMP + diphosphate. Functionally, catalyzes the attachment of valine to tRNA(Val). As ValRS can inadvertently accommodate and process structurally similar amino acids such as threonine, to avoid such errors, it has a 'posttransfer' editing activity that hydrolyzes mischarged Thr-tRNA(Val) in a tRNA-dependent manner. This Chlamydia abortus (strain DSM 27085 / S26/3) (Chlamydophila abortus) protein is Valine--tRNA ligase.